The following is a 991-amino-acid chain: UPF0182 protein RHA1_ro08670 (991 aa).

7 helical membrane passes run 16–36 (VMIM…RLVV), 61–81 (LILF…AVVW), 115–135 (FTVG…QASW), 170–190 (LILA…LGTH), 214–234 (VQLA…YWLD), 263–283 (RLIM…AIAV), and 291–311 (MATA…PALI). The disordered stretch occupies residues 902 to 940 (TGAVATAPGGDATTPPPTGGQPPAPPPPGAPPAPPPATS). The segment covering 903–914 (GAVATAPGGDAT) has biased composition (low complexity). Pro residues predominate over residues 915-938 (TPPPTGGQPPAPPPPGAPPAPPPA).

The protein belongs to the UPF0182 family.

It localises to the cell membrane. This Rhodococcus jostii (strain RHA1) protein is UPF0182 protein RHA1_ro08670.